The primary structure comprises 628 residues: Junctophilin-4 (628 aa).

Over 1–606 the chain is Cytoplasmic; sequence MSPGGKFDFD…RPAQPGAANP (606 aa). 6 MORN repeats span residues 50–72, 74–95, 96–117, 118–140, 141–163, and 164–186; these read LGVFTGPGGHSYQGHWQQGKREG, GVERKSRWTYRGEWLGGLKGRS, GVWESVSGLRYAGLWKDGFQDG, YGTETYSDGGTYQGQWQAGKRHG, YGVRQSVPYHQAALLRSPRRTSL, and DSGHSDPPTPPPPLPLPGDEGGS. 2 disordered regions span residues 158-214 and 231-276; these read PRRT…RTPA and GGRR…LIEG. Over residues 170 to 179 the composition is skewed to pro residues; sequence PPTPPPPLPL. Low complexity-rich tracts occupy residues 231–241 and 253–272; these read GGRRSSLGSKR and GSTGPPGSEASGPPAAAPPA. MORN repeat units lie at residues 317 to 339 and 340 to 362; these read YGRTTRPDGSREEGKYKRNRLVH and GGRVRSLLPLALRRGKVKEKVDR. The tract at residues 415–602 is disordered; the sequence is DLQPMLEAPG…AATERPAQPG (188 aa). Residues 432–443 show a composition bias toward acidic residues; sequence EGSDTEPLDEDS. Low complexity-rich tracts occupy residues 453–467 and 528–541; these read PSEGSPELPSSPASS and GSPLLGGCSDSSGS. The helical; Anchor for type IV membrane protein transmembrane segment at 607–628 threads the bilayer; sequence LVVGAVALLDLSLAFLFSQLLT.

This sequence belongs to the junctophilin family.

Its subcellular location is the cell membrane. The protein localises to the endoplasmic reticulum membrane. Its function is as follows. Junctophilins contribute to the formation of junctional membrane complexes (JMCs) which link the plasma membrane with the endoplasmic or sarcoplasmic reticulum in excitable cells. Provides a structural foundation for functional cross-talk between the cell surface and intracellular calcium release channels. JPH4 is brain-specific and appears to have an active role in certain neurons involved in motor coordination and memory. The protein is Junctophilin-4 (JPH4) of Homo sapiens (Human).